The chain runs to 410 residues: Hemocyanin, beta-C chain unit D (410 aa).

Residues H44 and H55 each coordinate Cu cation. A disulfide bond links C50 and C59. The segment at residues 60–62 is a cross-link (2'-(S-cysteinyl)-histidine (Cys-His)); that stretch reads CVH. Residues H71, H175, H179, and H206 each contribute to the Cu cation site. A disulfide bridge links C165 with C232. N253 carries N-linked (GlcNAc...) asparagine glycosylation. Cysteines 321 and 332 form a disulfide.

This sequence belongs to the tyrosinase family. Hemocyanin subfamily. Decamers of large identical subunits (450 kDa), each containing 8 globular oxygen-binding functional units. It depends on Cu(2+) as a cofactor.

In terms of biological role, hemocyanins are copper-containing oxygen carriers occurring freely dissolved in the hemolymph of many mollusks and arthropods. The protein is Hemocyanin, beta-C chain unit D of Helix pomatia (Roman snail).